A 564-amino-acid polypeptide reads, in one-letter code: Solute carrier family 22 member 21 (564 aa).

Residues 1–20 (MLDYDEVTAFLGEWGTFQRL) lie on the Cytoplasmic side of the membrane. A helical membrane pass occupies residues 21–41 (IFFLLSASIIPNGFTGLSAVF). The Extracellular segment spans residues 42-142 (LTAIPEHRCR…DLVCKDDWKA (101 aa)). Residues N57, N64, and N91 are each glycosylated (N-linked (GlcNAc...) asparagine). Residues 143-163 (PLTTSFFYVGVLLGSFISGQL) traverse the membrane as a helical segment. The Cytoplasmic portion of the chain corresponds to 164-172 (SDRFGRKNI). The chain crosses the membrane as a helical span at residues 173–193 (LFLTMAMHTGFSFIQVFSVNF). Residues 194-197 (EMFT) lie on the Extracellular side of the membrane. The helical transmembrane segment at 198–218 (LLYTLVGMGHISNYVAAFVLG) threads the bilayer. Residue 218-225 (GTEMLSKS) coordinates ATP. The Cytoplasmic segment spans residues 219 to 232 (TEMLSKSVRIIFAT). A helical membrane pass occupies residues 233-253 (LGVCIFFAFGFMVLPLFAYFI). At 254–257 (REWR) the chain is on the extracellular side. Residues 258–278 (RLLLAITLPGVLCGALWWFIP) form a helical membrane-spanning segment. The Cytoplasmic portion of the chain corresponds to 279 to 344 (ESPRWLISQG…YDLVRTPNIR (66 aa)). The helical transmembrane segment at 345–365 (ILTIMSIILWLTISVGYFGLS) threads the bilayer. At 366-376 (LDTPNLNGNIY) the chain is on the extracellular side. The helical transmembrane segment at 377–397 (VNCFLLAAVEVPAYVLAWLLL) threads the bilayer. Topologically, residues 398–409 (QHVSRRYSMAGS) are cytoplasmic. The chain crosses the membrane as a helical span at residues 410–430 (LFLGGSVLLLVQLVPSDLHYL). Residues 431 to 433 (STT) are Extracellular-facing. A helical membrane pass occupies residues 434–454 (LVMVGKFGITSAYSMVYVYTA). The Cytoplasmic segment spans residues 455–465 (ELYPTVVRNMG). The helical transmembrane segment at 466-486 (VGVSSTASRLGSILSPYFVYL) threads the bilayer. Residues 487–491 (GAYDR) are Extracellular-facing. Residues 492–512 (RLPYILMGSLTILTAIITLFF) traverse the membrane as a helical segment. The Cytoplasmic segment spans residues 513-564 (PESSGVSLPETIDEMQKVKKLKQRQSLSKKGSPKESKGNVSRTSRTSEPKGF). The interval 532 to 564 (KLKQRQSLSKKGSPKESKGNVSRTSRTSEPKGF) is disordered.

This sequence belongs to the major facilitator (TC 2.A.1) superfamily. Organic cation transporter (TC 2.A.1.19) family. Predominantly expressed in testis.

The protein resides in the peroxisome membrane. Sodium-ion independent, medium affinity carnitine transporter. Also transports organic cations such as tetraethylammonium (TEA) without the involvement of sodium. Relative uptake activity ratio of carnitine to TEA is 746. The protein is Solute carrier family 22 member 21 (Slc22a21) of Mus musculus (Mouse).